The primary structure comprises 387 residues: Phosphoglycerate kinase (387 aa).

Substrate-binding positions include 21–23, R36, 59–62, R113, and R146; these read DLN and HLGR. Residues K197, E314, and 340-343 contribute to the ATP site; that span reads GGDT.

The protein belongs to the phosphoglycerate kinase family. As to quaternary structure, monomer.

It localises to the cytoplasm. The catalysed reaction is (2R)-3-phosphoglycerate + ATP = (2R)-3-phospho-glyceroyl phosphate + ADP. Its pathway is carbohydrate degradation; glycolysis; pyruvate from D-glyceraldehyde 3-phosphate: step 2/5. The protein is Phosphoglycerate kinase of Klebsiella pneumoniae (strain 342).